Reading from the N-terminus, the 354-residue chain is Stimulator of interferon genes protein 3 (354 aa).

The next 4 helical transmembrane spans lie at 20 to 40 (VTFA…FALW), 48 to 68 (INFV…GELI), 101 to 121 (YGSC…YALL), and 132 to 152 (YGIF…IVGI). Residues asparagine 178, tyrosine 183, arginine 250, isoleucine 251, lysine 253, glutamate 272, serine 275, and asparagine 276 each contribute to the 3',3'-cGAMP site.

Belongs to the STING family.

Its subcellular location is the membrane. Its function is as follows. Facilitator of innate immune signaling that acts as a sensor of second messenger signals produced by cyclic GMP-AMP synthase-like receptors (cGLRs) and promotes the production of type I interferon. Innate immune response is triggered in response to nucleotides from viruses and bacteria delivered to the cytoplasm. Acts by binding cyclic dinucleotides: recognizes and binds cyclic 3'-3' linked cGAMP (3'-3'-cGAMP), cyclic di-AMP (3',3'-c-di-AMP) and cyclic di-GMP (3',3'-c-di-GMP) second messengers produced by cGLRs in response to nucleotides in the cytosol, such as double-stranded RNA (dsRNA). Upon binding to 3'-3'-cGAMP, 3',3'-c-di-AMP or 3',3'-c-di-GMP, oligomerizes and promotes the recruitment and subsequent activation of the transcription factor IRF3 to induce expression of type I interferon. In Stylophora pistillata (Smooth cauliflower coral), this protein is Stimulator of interferon genes protein 3.